We begin with the raw amino-acid sequence, 486 residues long: Glutamyl-tRNA(Gln) amidotransferase subunit A (486 aa).

Catalysis depends on charge relay system residues Lys-76 and Ser-151. The Acyl-ester intermediate role is filled by Ser-175.

Belongs to the amidase family. GatA subfamily. As to quaternary structure, heterotrimer of A, B and C subunits.

It catalyses the reaction L-glutamyl-tRNA(Gln) + L-glutamine + ATP + H2O = L-glutaminyl-tRNA(Gln) + L-glutamate + ADP + phosphate + H(+). Allows the formation of correctly charged Gln-tRNA(Gln) through the transamidation of misacylated Glu-tRNA(Gln) in organisms which lack glutaminyl-tRNA synthetase. The reaction takes place in the presence of glutamine and ATP through an activated gamma-phospho-Glu-tRNA(Gln). This is Glutamyl-tRNA(Gln) amidotransferase subunit A from Nitrosomonas eutropha (strain DSM 101675 / C91 / Nm57).